A 430-amino-acid chain; its full sequence is Phosphoserine aminotransferase 1, chloroplastic (430 aa).

The N-terminal 51 residues, 1–51 (MAATTNSFLVGSNNTQIPALKPKSSSQSFLHLSKPNTVNFVSKTKPVAVRC), are a transit peptide targeting the chloroplast. The residue at position 52 (Val-52) is an N-acetylvaline. Arg-111 contributes to the L-glutamate binding site. Residues 145-146 (AT), Trp-171, Thr-221, Asp-241, and Gln-264 each bind pyridoxal 5'-phosphate. Lys-265 bears the N6-(pyridoxal phosphate)lysine mark. 306–307 (NT) serves as a coordination point for pyridoxal 5'-phosphate.

Belongs to the class-V pyridoxal-phosphate-dependent aminotransferase family. SerC subfamily. As to quaternary structure, homodimer. Pyridoxal 5'-phosphate serves as cofactor. As to expression, ubiquitous, but expressed preferentially in light-grown roots and shoots. Detected in root meristems and in root tissues surrounding the vascular bundle.

The protein localises to the plastid. The protein resides in the chloroplast. It catalyses the reaction O-phospho-L-serine + 2-oxoglutarate = 3-phosphooxypyruvate + L-glutamate. The catalysed reaction is 4-(phosphooxy)-L-threonine + 2-oxoglutarate = (R)-3-hydroxy-2-oxo-4-phosphooxybutanoate + L-glutamate. It functions in the pathway amino-acid biosynthesis; L-serine biosynthesis; L-serine from 3-phospho-D-glycerate: step 2/3. Its pathway is cofactor biosynthesis; pyridoxine 5'-phosphate biosynthesis; pyridoxine 5'-phosphate from D-erythrose 4-phosphate: step 3/5. With respect to regulation, inhibited by high concentration of cysteine and by 3-phosphonooxypyruvate. Not inhibited by serine, threonine, valine, glycine, tryptophan and O-acetyl-L-serine. In terms of biological role, involved in the plastidial phosphorylated pathway of serine biosynthesis (PPSB). Catalyzes the reversible conversion of 3-phosphohydroxypyruvate to phosphoserine. The polypeptide is Phosphoserine aminotransferase 1, chloroplastic (Arabidopsis thaliana (Mouse-ear cress)).